Reading from the N-terminus, the 203-residue chain is Translation initiation factor IF-3 (203 aa).

Residues Glu-172–Glu-182 are compositionally biased toward basic and acidic residues. A disordered region spans residues Glu-172 to Asp-203.

Belongs to the IF-3 family. Monomer.

It localises to the cytoplasm. Its function is as follows. IF-3 binds to the 30S ribosomal subunit and shifts the equilibrium between 70S ribosomes and their 50S and 30S subunits in favor of the free subunits, thus enhancing the availability of 30S subunits on which protein synthesis initiation begins. The protein is Translation initiation factor IF-3 of Helicobacter pylori (strain ATCC 700392 / 26695) (Campylobacter pylori).